The following is a 1012-amino-acid chain: Cellulose synthase-like protein D5 (1012 aa).

The segment at 1–81 (MSVDYANYTV…ARVPAPSSNK (81 aa)) is disordered. Residues 20–37 (PSGGAPPAAPSAGGARPG) show a composition bias toward low complexity. Residues 57–69 (GGGDDGAKMDRRL) are compositionally biased toward basic and acidic residues. Helical transmembrane passes span 150 to 170 (ILSP…LFLV) and 180 to 200 (ALWL…SWLL). Residue Asp280 is part of the active site. Residues 597–620 (PRQGSEAMPGAGGGRSGGGSVGGD) are disordered. Positions 606 to 618 (GAGGGRSGGGSVG) are enriched in gly residues. Asp717 is a catalytic residue. A run of 6 helical transmembrane segments spans residues 799-819 (LFLI…QFIV), 825-845 (TFLS…LLEV), 871-891 (LAAV…SFTL), 914-934 (SLFI…VVGV), 948-968 (LLGG…FAKG), and 978-998 (TIVY…WITI).

The protein belongs to the glycosyltransferase 2 family. Plant cellulose synthase-like D subfamily.

The protein localises to the golgi apparatus membrane. Its function is as follows. Thought to be a Golgi-localized beta-glycan synthase that polymerize the backbones of noncellulosic polysaccharides (hemicelluloses) of plant cell wall. This chain is Cellulose synthase-like protein D5 (CSLD5), found in Oryza sativa subsp. japonica (Rice).